A 147-amino-acid polypeptide reads, in one-letter code: Transcriptional regulator MraZ (147 aa).

SpoVT-AbrB domains are found at residues 6–48 and 77–120; these read NFER…NSEE and TVEV…SKAK.

This sequence belongs to the MraZ family. In terms of assembly, forms oligomers.

It localises to the cytoplasm. The protein resides in the nucleoid. This is Transcriptional regulator MraZ from Mycoplasmopsis pulmonis (strain UAB CTIP) (Mycoplasma pulmonis).